The chain runs to 689 residues: Elongation factor G (689 aa).

Residues 8-283 (SKCRNIGIMA…AVVDFLPAPN (276 aa)) form the tr-type G domain. Residues 17-24 (AHIDAGKT), 81-85 (DTPGH), and 135-138 (NKMD) contribute to the GTP site.

Belongs to the TRAFAC class translation factor GTPase superfamily. Classic translation factor GTPase family. EF-G/EF-2 subfamily.

Its subcellular location is the cytoplasm. Its function is as follows. Catalyzes the GTP-dependent ribosomal translocation step during translation elongation. During this step, the ribosome changes from the pre-translocational (PRE) to the post-translocational (POST) state as the newly formed A-site-bound peptidyl-tRNA and P-site-bound deacylated tRNA move to the P and E sites, respectively. Catalyzes the coordinated movement of the two tRNA molecules, the mRNA and conformational changes in the ribosome. This is Elongation factor G from Ehrlichia ruminantium (strain Welgevonden).